We begin with the raw amino-acid sequence, 346 residues long: Heat-inducible transcription repressor HrcA (346 aa).

This sequence belongs to the HrcA family.

Negative regulator of class I heat shock genes (grpE-dnaK-dnaJ and groELS operons). Prevents heat-shock induction of these operons. This is Heat-inducible transcription repressor HrcA from Pediococcus pentosaceus (strain ATCC 25745 / CCUG 21536 / LMG 10740 / 183-1w).